The primary structure comprises 296 residues: UDP-N-acetylenolpyruvoylglucosamine reductase (296 aa).

The FAD-binding PCMH-type domain maps to 18–189 (LGGRALAEVR…TGADIVLRRG (172 aa)). Residue R166 is part of the active site. C218 (proton donor) is an active-site residue. E289 is an active-site residue.

This sequence belongs to the MurB family. It depends on FAD as a cofactor.

Its subcellular location is the cytoplasm. It catalyses the reaction UDP-N-acetyl-alpha-D-muramate + NADP(+) = UDP-N-acetyl-3-O-(1-carboxyvinyl)-alpha-D-glucosamine + NADPH + H(+). It participates in cell wall biogenesis; peptidoglycan biosynthesis. Cell wall formation. In Nitratidesulfovibrio vulgaris (strain ATCC 29579 / DSM 644 / CCUG 34227 / NCIMB 8303 / VKM B-1760 / Hildenborough) (Desulfovibrio vulgaris), this protein is UDP-N-acetylenolpyruvoylglucosamine reductase.